The following is a 604-amino-acid chain: UvrABC system protein C (604 aa).

The GIY-YIG domain maps to 17–95; sequence SQPGVYRMLN…IKSLAPRYNI (79 aa). The UVR domain maps to 204 to 239; sequence DEVLKTIEQKMFEASDRQAYEQAVLFRDQMQALRMI.

The protein belongs to the UvrC family. In terms of assembly, interacts with UvrB in an incision complex.

It is found in the cytoplasm. The UvrABC repair system catalyzes the recognition and processing of DNA lesions. UvrC both incises the 5' and 3' sides of the lesion. The N-terminal half is responsible for the 3' incision and the C-terminal half is responsible for the 5' incision. The polypeptide is UvrABC system protein C (Nitrosomonas eutropha (strain DSM 101675 / C91 / Nm57)).